The primary structure comprises 215 residues: Cytochrome b6 (215 aa).

A helical membrane pass occupies residues 32 to 52; it reads IFYCLGGITLTCFLVQVATGF. Heme c is bound at residue cysteine 35. The heme b site is built by histidine 86 and histidine 100. 3 helical membrane-spanning segments follow: residues 90 to 110, 116 to 136, and 186 to 206; these read ASMM…TGGF, LTWV…VTGY, and LHTF…FLMI. The heme b site is built by histidine 187 and histidine 202.

This sequence belongs to the cytochrome b family. PetB subfamily. As to quaternary structure, the 4 large subunits of the cytochrome b6-f complex are cytochrome b6, subunit IV (17 kDa polypeptide, PetD), cytochrome f and the Rieske protein, while the 4 small subunits are PetG, PetL, PetM and PetN. The complex functions as a dimer. Requires heme b as cofactor. Heme c is required as a cofactor.

Its subcellular location is the plastid. It is found in the chloroplast thylakoid membrane. Functionally, component of the cytochrome b6-f complex, which mediates electron transfer between photosystem II (PSII) and photosystem I (PSI), cyclic electron flow around PSI, and state transitions. The protein is Cytochrome b6 of Pinus koraiensis (Korean pine).